The sequence spans 162 residues: UPF0303 protein RL3365 (162 aa).

The protein belongs to the UPF0303 family.

The chain is UPF0303 protein RL3365 from Rhizobium johnstonii (strain DSM 114642 / LMG 32736 / 3841) (Rhizobium leguminosarum bv. viciae).